The sequence spans 636 residues: 3-phosphoinositide-dependent protein kinase 1 (636 aa).

2 stretches are compositionally biased toward low complexity: residues 1–20 (MEDLTPTNTSLDTTTTNNDT) and 27–37 (APTTLNLTPTA). The interval 1–45 (MEDLTPTNTSLDTTTTNNDTTSDREAAPTTLNLTPTASESENSLS) is disordered. Residues 69 to 364 (FMFLQSMGEG…SQELMAHKFF (296 aa)) enclose the Protein kinase domain. Residues 79 to 81 (AYS) and Lys98 each bind ATP. Residues 100–149 (LQKSYLNRHQKMDAIIREKNILTYLSQECGGHPFVTQLYTHFHDQARIYF) form a PIF-pocket region. ATP contacts are provided by residues 152-154 (GLV) and Asp158. Asp197 serves as the catalytic Proton acceptor. Residues Asp201 and Asp215 each coordinate ATP. 2 disordered regions span residues 233 to 264 (TDANQASSRSSDSGSPPPTRFYSDEEVPEENT) and 593 to 636 (KKSR…KKSP). The stretch at 550-631 (DLEKKADEWC…QVSKKLSMQM (82 aa)) forms a coiled coil. Residues 597 to 624 (KEMMREQKALRRKQEKEEKKALKAEQVS) are compositionally biased toward basic and acidic residues.

Belongs to the protein kinase superfamily. AGC Ser/Thr protein kinase family. PDPK1 subfamily. Interacts directly with sgk-1, akt-1 and akt-2.

Its subcellular location is the cytoplasm. It carries out the reaction L-seryl-[protein] + ATP = O-phospho-L-seryl-[protein] + ADP + H(+). It catalyses the reaction L-threonyl-[protein] + ATP = O-phospho-L-threonyl-[protein] + ADP + H(+). Functionally, involved in the daf-2/insulin receptor-like transduction pathway, which controls longevity and prevents developmental arrest at the dauer stage. Phosphorylates and activates sgk-1, akt-1 and akt-2. The polypeptide is 3-phosphoinositide-dependent protein kinase 1 (Caenorhabditis elegans).